The following is a 175-amino-acid chain: Urease accessory protein UreE (175 aa).

Residues 134 to 175 (FQPESGAYGGGHHHGDESATDLHNPGHGPHRSVPKIHEFKPR) are disordered.

Belongs to the UreE family.

It is found in the cytoplasm. Its function is as follows. Involved in urease metallocenter assembly. Binds nickel. Probably functions as a nickel donor during metallocenter assembly. This is Urease accessory protein UreE from Dechloromonas aromatica (strain RCB).